The primary structure comprises 394 residues: Elongation factor Tu (394 aa).

Positions 10 to 204 (KPHVNVGTIG…AMDDYIPAPE (195 aa)) constitute a tr-type G domain. The G1 stretch occupies residues 19-26 (GHVDHGKT). 19 to 26 (GHVDHGKT) is a GTP binding site. Threonine 26 serves as a coordination point for Mg(2+). The G2 stretch occupies residues 60-64 (GITIN). The tract at residues 81 to 84 (DCPG) is G3. GTP-binding positions include 81–85 (DCPGH) and 136–139 (NKCD). Positions 136–139 (NKCD) are G4. Residues 174 to 176 (SAL) form a G5 region.

It belongs to the TRAFAC class translation factor GTPase superfamily. Classic translation factor GTPase family. EF-Tu/EF-1A subfamily. As to quaternary structure, monomer.

It localises to the cytoplasm. It catalyses the reaction GTP + H2O = GDP + phosphate + H(+). Its function is as follows. GTP hydrolase that promotes the GTP-dependent binding of aminoacyl-tRNA to the A-site of ribosomes during protein biosynthesis. The protein is Elongation factor Tu of Francisella tularensis subsp. holarctica (strain FTNF002-00 / FTA).